We begin with the raw amino-acid sequence, 61 residues long: Large ribosomal subunit protein bL32 (61 aa).

Residues 1–16 (MPTPKKKTSRSKRDMR) show a composition bias toward basic residues. Residues 1–47 (MPTPKKKTSRSKRDMRRSHDGLTAPAIAVEKKTGELVRPHRAHKGAD) are disordered. Basic and acidic residues predominate over residues 29–38 (VEKKTGELVR).

Belongs to the bacterial ribosomal protein bL32 family.

This Bdellovibrio bacteriovorus (strain ATCC 15356 / DSM 50701 / NCIMB 9529 / HD100) protein is Large ribosomal subunit protein bL32.